The chain runs to 879 residues: RNA-directed RNA polymerase (879 aa).

Residue 259–266 (GLPYVGRT) participates in GTP binding. Residues 398–598 (LVYADNIYIV…DKERLFCSAA (201 aa)) enclose the RdRp catalytic domain. The tract at residues 846–879 (GAGTSRPMGMEAPTRSKNAVKMAKRRQRQKESRQ) is disordered.

Interacts with VP3 in the cytoplasm. May exist in multiple phosphorylated forms.

The protein resides in the virion. The catalysed reaction is RNA(n) + a ribonucleoside 5'-triphosphate = RNA(n+1) + diphosphate. Its function is as follows. RNA-dependent RNA polymerase which is found both free and covalently attached to the genomic RNA. May also contain guanylyl and methyl transferase activities. The sequence is that of RNA-directed RNA polymerase (VP1) from Gallus gallus (Chicken).